The following is a 689-amino-acid chain: MKTFCGRANPTTGSLEWVEEDEDYDYHQEIARSRYADMLHDKDRNMKYYQGIRAAVSRVKGRGEKAIVLDIGTGTGLLSMMAASAGADFCYAVEVFKPMANAAVKIVEKNGFGDKIKVINKHSTEVTVGPDGDMQCRANILVTELFDTELIGEGALPTYEHAHKYLVQEGCEAVPHRATVYVQLVESKRMWSWNKLFPVHVEAEDGEKIIVSPSEMENCPGVPSVCDIQLNQMPSSDFTILSDVVTMFSVDFSKPVRSASTCYRAQLDPVKSGKAQIVLSWWDIDMDPSGTINCTMAPYWVKPMSAFQWRDHWMQCVYFLPKEEQVLQGEKVHLTACRDEYSVWYTLQKAREEDESKADARVESPVCRCQAHLLWNRPRFGELNDQNRTRQYIKSLMSVLRTDSVCLCISDGSLLPVLAHYLGAEQVFTLENSAVSCSVMKKFFKANHLEDKIKIVEARPELLTSSHLEEKKISVLVGEPFFTTSLLPWHNLYFWYARTAVTEHLASDVTVLPQSAALHMMIVEFQDLWRIRSPCGTCEGFDVQTMDDMIKNSLNFRESKEAEPHPLWEYPCKSLSNPQEVLLFDFRKTVPQHCLSTEGSVNLLRKGKSHGAVLWMEYHLTADISVSTGLMQISNEKGNCEWNPHCKQAVYFFSSVIESETLADVPTAVTYAIKFDTKTGEIAMDFKLL.

2 SAM-dependent MTase PRMT-type domains span residues 14 to 344 (SLEW…YSVW) and 359 to 685 (DARV…IAMD). Residues Glu144 and Glu153 contribute to the active site.

The protein belongs to the class I-like SAM-binding methyltransferase superfamily. Protein arginine N-methyltransferase family. PRMT7 subfamily.

It localises to the cytoplasm. It is found in the cytosol. The protein resides in the nucleus. The catalysed reaction is L-arginyl-[protein] + S-adenosyl-L-methionine = N(omega)-methyl-L-arginyl-[protein] + S-adenosyl-L-homocysteine + H(+). Arginine methyltransferase that can both catalyze the formation of omega-N monomethylarginine (MMA) and symmetrical dimethylarginine (sDMA), with a preference for the formation of MMA. Specifically mediates the symmetrical dimethylation of arginine residues in the small nuclear ribonucleoproteins Sm D1 (SNRPD1) and Sm D3 (SNRPD3); such methylation being required for the assembly and biogenesis of snRNP core particles. Specifically mediates the symmetric dimethylation of histone H4 'Arg-3' to form H4R3me2s. Plays a role in gene imprinting by being recruited by CTCFL at the H19 imprinted control region (ICR) and methylating histone H4 to form H4R3me2s, possibly leading to recruit DNA methyltransferases at these sites. May also play a role in embryonic stem cell (ESC) pluripotency. Also able to mediate the arginine methylation of histone H2A and myelin basic protein (MBP) in vitro; the relevance of such results is however unclear in vivo. The sequence is that of Protein arginine N-methyltransferase 7 (PRMT7) from Gallus gallus (Chicken).